The primary structure comprises 252 residues: 4-formylbenzenesulfonate dehydrogenase TsaC1/TsaC2 (252 aa).

Residues 9–36 and Asp62 contribute to the NAD(+) site; that span reads IVTGGASGFGAAIARRLSQAGAAVLVAD. Ser142 contacts substrate. Tyr155 (proton acceptor) is an active-site residue. Lys159 contributes to the NAD(+) binding site.

Belongs to the short-chain dehydrogenases/reductases (SDR) family. Homodimer.

It carries out the reaction 4-formylbenzenesulfonate + NAD(+) + H2O = 4-sulfobenzoate + NADH + 2 H(+). Its function is as follows. Involved in the toluene-4-sulfonate degradation pathway. Does not discriminate between the sulfonate and the carboxyl substituents and can also be involved in the p-toluenecarboxylate degradation pathway. The polypeptide is 4-formylbenzenesulfonate dehydrogenase TsaC1/TsaC2 (tsaC1) (Comamonas testosteroni (Pseudomonas testosteroni)).